The chain runs to 423 residues: UDP-N-acetylglucosamine 1-carboxyvinyltransferase 2 (423 aa).

A phosphoenolpyruvate-binding site is contributed by 23–24; that stretch reads KN. A UDP-N-acetyl-alpha-D-glucosamine-binding site is contributed by arginine 93. Residue cysteine 117 is the Proton donor of the active site. 2-(S-cysteinyl)pyruvic acid O-phosphothioketal is present on cysteine 117. UDP-N-acetyl-alpha-D-glucosamine contacts are provided by residues 122-126, aspartate 305, and isoleucine 327; that span reads RPIDQ.

The protein belongs to the EPSP synthase family. MurA subfamily.

It is found in the cytoplasm. It catalyses the reaction phosphoenolpyruvate + UDP-N-acetyl-alpha-D-glucosamine = UDP-N-acetyl-3-O-(1-carboxyvinyl)-alpha-D-glucosamine + phosphate. It participates in cell wall biogenesis; peptidoglycan biosynthesis. In terms of biological role, cell wall formation. Adds enolpyruvyl to UDP-N-acetylglucosamine. In Listeria monocytogenes serotype 4b (strain F2365), this protein is UDP-N-acetylglucosamine 1-carboxyvinyltransferase 2.